We begin with the raw amino-acid sequence, 153 residues long: Large ribosomal subunit protein uL22 (153 aa).

A disordered region spans residues 110 to 153 (ITVIVESRPPKQKGASAASARSRRAQGSKAAATKKSAETKEGSE). A compositionally biased stretch (basic and acidic residues) spans 144–153 (KSAETKEGSE).

The protein belongs to the universal ribosomal protein uL22 family. As to quaternary structure, part of the 50S ribosomal subunit.

This protein binds specifically to 23S rRNA; its binding is stimulated by other ribosomal proteins, e.g. L4, L17, and L20. It is important during the early stages of 50S assembly. It makes multiple contacts with different domains of the 23S rRNA in the assembled 50S subunit and ribosome. Functionally, the globular domain of the protein is located near the polypeptide exit tunnel on the outside of the subunit, while an extended beta-hairpin is found that lines the wall of the exit tunnel in the center of the 70S ribosome. The chain is Large ribosomal subunit protein uL22 from Mycolicibacterium smegmatis (strain ATCC 700084 / mc(2)155) (Mycobacterium smegmatis).